The chain runs to 214 residues: Pyridoxine/pyridoxamine 5'-phosphate oxidase (214 aa).

Residues 8–11 and Lys66 each bind substrate; that span reads RINY. FMN-binding positions include 61 to 66, 76 to 77, Arg82, Lys83, and Gln105; these read RIVLIK and FT. Tyr123, Arg127, and Ser131 together coordinate substrate. FMN contacts are provided by residues 140–141 and Trp184; that span reads QS. 190–192 provides a ligand contact to substrate; sequence RLH. Arg194 contributes to the FMN binding site.

This sequence belongs to the pyridoxamine 5'-phosphate oxidase family. In terms of assembly, homodimer. FMN serves as cofactor.

The catalysed reaction is pyridoxamine 5'-phosphate + O2 + H2O = pyridoxal 5'-phosphate + H2O2 + NH4(+). The enzyme catalyses pyridoxine 5'-phosphate + O2 = pyridoxal 5'-phosphate + H2O2. Its pathway is cofactor metabolism; pyridoxal 5'-phosphate salvage; pyridoxal 5'-phosphate from pyridoxamine 5'-phosphate: step 1/1. The protein operates within cofactor metabolism; pyridoxal 5'-phosphate salvage; pyridoxal 5'-phosphate from pyridoxine 5'-phosphate: step 1/1. Catalyzes the oxidation of either pyridoxine 5'-phosphate (PNP) or pyridoxamine 5'-phosphate (PMP) into pyridoxal 5'-phosphate (PLP). In Burkholderia cenocepacia (strain HI2424), this protein is Pyridoxine/pyridoxamine 5'-phosphate oxidase.